Consider the following 441-residue polypeptide: MSASNYATERETAEGKVFTVTGGDWDVVVSGTDPINDERIVVNMGPQHPSTHGVLRLVLELEGETVREARSVVGYLHTGIEKNLEFRNWVQGSTFVTRMDYLAPLFNETAYALAVEKLLGIEEQITERATTIRVLMMELNRISSHLVWVATTAMELGAINMMLYGFREREYILEIFELITGLRMNHAYVRPGGVAQDVPDEAIAKIRDFLKLMPKKLEEYEKMLSGQPIWLERTQNVGVLDATGCLALGVTGPVLRSAGLAWDLRKTMPYCGYETYEFDVPTHTDGDVWGRYLVRLAEIRESLKLVEQAVDRLRPGPVMVADRKIAWPAQLAIGVDGMGNSLEHVAKIMGQSMESLIHHFKLVTEGFRVPPGQVYVALEAPRGELGVHAVSDGGTRPYRVHYREPSFVNLQALPAMAEGGLIADVIAGGASLDPVMGGCDR.

It belongs to the complex I 49 kDa subunit family. In terms of assembly, NDH-1 is composed of 14 different subunits. Subunits NuoB, C, D, E, F, and G constitute the peripheral sector of the complex.

The protein localises to the cell membrane. It catalyses the reaction a quinone + NADH + 5 H(+)(in) = a quinol + NAD(+) + 4 H(+)(out). In terms of biological role, NDH-1 shuttles electrons from NADH, via FMN and iron-sulfur (Fe-S) centers, to quinones in the respiratory chain. The immediate electron acceptor for the enzyme in this species is believed to be a menaquinone. Couples the redox reaction to proton translocation (for every two electrons transferred, four hydrogen ions are translocated across the cytoplasmic membrane), and thus conserves the redox energy in a proton gradient. The chain is NADH-quinone oxidoreductase subunit D 1 from Salinispora arenicola (strain CNS-205).